Reading from the N-terminus, the 865-residue chain is Nitrogen regulatory protein nrfA (865 aa).

Disordered regions lie at residues 1–75, 115–140, 177–227, 557–605, and 617–663; these read MEGI…DEMQ, RKER…PSGI, FDSP…QDQR, GSTD…RTAS, and LNGS…AGPT. Low complexity predominate over residues 32 to 46; it reads DDFTFDSPFSSSGSS. Basic and acidic residues-rich tracts occupy residues 115–126 and 180–189; these read RKEREQQEREQQ and PAEHPSHPSA. A compositionally biased stretch (polar residues) spans 582–592; that stretch reads ASVSDVRNQNQ. The GATA-type zinc finger occupies 665 to 689; that stretch reads CTNCFTQTTPLWRRNPEGQPLCNAC. The disordered stretch occupies residues 713–854; the sequence is NRSSANTLAV…NHSIAGGQGA (142 aa). 2 stretches are compositionally biased toward polar residues: residues 715–724 and 737–764; these read SSANTLAVGT and IQHA…SNTL. 2 stretches are compositionally biased toward low complexity: residues 771–786 and 830–844; these read PIAA…AGVA and PLAP…ANPA.

Its subcellular location is the nucleus. In terms of biological role, major nitrogen regulatory protein. The polypeptide is Nitrogen regulatory protein nrfA (nrfA) (Penicillium urticae).